The sequence spans 463 residues: Serine/threonine-protein kinase sgk-1 (463 aa).

The Protein kinase domain occupies 135–392 (FDYLTTIGKG…FRDIRDHPFF (258 aa)). ATP is bound by residues 141-149 (IGKGSFGRV) and Lys-164. The active-site Proton acceptor is the Asp-259. The AGC-kinase C-terminal domain maps to 393 to 463 (LPVDWDKLLN…TFVDTNRVLV (71 aa)).

The protein belongs to the protein kinase superfamily. AGC Ser/Thr protein kinase family. In terms of assembly, interacts with pdk-1, akt-1, akt-2 and daf-16. Part of a complex containing sgk-1, akt-1 and akt-2. Interacts with let-92 phosphatase regulatory subunit pptr-1. Mg(2+) serves as cofactor. As to expression, expressed in late embryos just before hatching. At postembryonic stages, expressed in sensory and motor neurons and in the intestine. Highly expressed in the intestine and head and tail neurons.

Its subcellular location is the cytoplasm. It localises to the nucleus. The protein resides in the apical cell membrane. The enzyme catalyses L-seryl-[protein] + ATP = O-phospho-L-seryl-[protein] + ADP + H(+). It catalyses the reaction L-threonyl-[protein] + ATP = O-phospho-L-threonyl-[protein] + ADP + H(+). Phosphorylated and activated by pdk-1. Acts downstream of PI3 kinase age-1 and kinase pdk-1 in the daf-2/insulin receptor-like transduction pathway. Essential role in regulating development, stress response, and longevity. Phosphorylates Forkhead-related daf-16 and the longevity-promoting skn-1 transcription factors, which inhibits their entry into the nucleus and antagonizes their function. Promotes the cytoplasmic localization of the transcription factor pqm-1. Plays a role in the intracellular trafficking of proteins such as mig-14 to the cell membrane, and this may be through positively regulating ceramide synthesis. Acts downstream of rict-1 to regulate fat storage, size, development and vitellogenesis. Downstream of age-1 and together with akt-1/2, promotes cell survival during embryonic development. Plays a role in maintaining the gonadal basement membrane through antagonizing akt-1 activity. Does not appear to play a role in immune function. In Caenorhabditis elegans, this protein is Serine/threonine-protein kinase sgk-1.